We begin with the raw amino-acid sequence, 82 residues long: Small ribosomal subunit protein uS17 (82 aa).

It belongs to the universal ribosomal protein uS17 family. As to quaternary structure, part of the 30S ribosomal subunit.

One of the primary rRNA binding proteins, it binds specifically to the 5'-end of 16S ribosomal RNA. The sequence is that of Small ribosomal subunit protein uS17 from Rickettsia typhi (strain ATCC VR-144 / Wilmington).